Reading from the N-terminus, the 415-residue chain is Gamma-glutamyl phosphate reductase (415 aa).

Belongs to the gamma-glutamyl phosphate reductase family.

The protein localises to the cytoplasm. The enzyme catalyses L-glutamate 5-semialdehyde + phosphate + NADP(+) = L-glutamyl 5-phosphate + NADPH + H(+). It participates in amino-acid biosynthesis; L-proline biosynthesis; L-glutamate 5-semialdehyde from L-glutamate: step 2/2. Functionally, catalyzes the NADPH-dependent reduction of L-glutamate 5-phosphate into L-glutamate 5-semialdehyde and phosphate. The product spontaneously undergoes cyclization to form 1-pyrroline-5-carboxylate. The sequence is that of Gamma-glutamyl phosphate reductase from Desulforamulus reducens (strain ATCC BAA-1160 / DSM 100696 / MI-1) (Desulfotomaculum reducens).